The sequence spans 235 residues: Ribonuclease 3 (235 aa).

Positions 6–131 constitute an RNase III domain; that stretch reads IDQLFKLTGH…LIAVMYLDGG (126 aa). Glu-44 is a binding site for Mg(2+). The active site involves Asp-48. Mg(2+) is bound by residues Asp-117 and Glu-120. Residue Glu-120 is part of the active site. Residues 156-225 form the DRBM domain; the sequence is DAKTELQEWA…AEKILRREGV (70 aa).

It belongs to the ribonuclease III family. In terms of assembly, homodimer. The cofactor is Mg(2+).

Its subcellular location is the cytoplasm. The enzyme catalyses Endonucleolytic cleavage to 5'-phosphomonoester.. Its function is as follows. Digests double-stranded RNA. Involved in the processing of primary rRNA transcript to yield the immediate precursors to the large and small rRNAs (23S and 16S). Processes some mRNAs, and tRNAs when they are encoded in the rRNA operon. Processes pre-crRNA and tracrRNA of type II CRISPR loci if present in the organism. The chain is Ribonuclease 3 from Bartonella tribocorum (strain CIP 105476 / IBS 506).